The sequence spans 38 residues: Photosystem II reaction center protein M (38 aa).

The helical transmembrane segment at 7–27 (GFVASILFVLVPTVFLLILYI) threads the bilayer.

This sequence belongs to the PsbM family. PSII is composed of 1 copy each of membrane proteins PsbA, PsbB, PsbC, PsbD, PsbE, PsbF, PsbH, PsbI, PsbJ, PsbK, PsbL, PsbM, PsbT, PsbX, PsbY, PsbZ, Psb30/Ycf12, peripheral proteins PsbO, CyanoQ (PsbQ), PsbU, PsbV and a large number of cofactors. It forms dimeric complexes.

The protein localises to the cellular thylakoid membrane. Its function is as follows. One of the components of the core complex of photosystem II (PSII). PSII is a light-driven water:plastoquinone oxidoreductase that uses light energy to abstract electrons from H(2)O, generating O(2) and a proton gradient subsequently used for ATP formation. It consists of a core antenna complex that captures photons, and an electron transfer chain that converts photonic excitation into a charge separation. This subunit is found at the monomer-monomer interface. This chain is Photosystem II reaction center protein M, found in Nostoc punctiforme (strain ATCC 29133 / PCC 73102).